Here is a 229-residue protein sequence, read N- to C-terminus: MNVEEMKKIAAKEALKFIEDDMVIGLGTGSTTAYFIKLLGEKLKRGEISDIVGVPTSYQAKLLAIEHDIPIASLDQVDAIDVAVDGADEVDPNLNLIKGRGAALTMEKIIEYRAGTFIVLVDERKLVDYLCQKMPVPIEVIPQAWKAIIEELSIFNAKAELRMGVNKDGPVITDNGNFIIDAKFPRIDDPLDMEIELNTIPGVIENGIFADIADIVIVGTREGVKKLER.

Substrate contacts are provided by residues 28–31, 85–88, and 98–101; these read TGST, DGAD, and KGRG. Residue glutamate 107 is the Proton acceptor of the active site. Lysine 125 contributes to the substrate binding site.

The protein belongs to the ribose 5-phosphate isomerase family. As to quaternary structure, homotetramer.

It carries out the reaction aldehydo-D-ribose 5-phosphate = D-ribulose 5-phosphate. The protein operates within carbohydrate degradation; pentose phosphate pathway; D-ribose 5-phosphate from D-ribulose 5-phosphate (non-oxidative stage): step 1/1. Inhibited by D-4-phosphoerythronic acid. Involved in the first step of the non-oxidative branch of the pentose phosphate pathway. It catalyzes the reversible conversion of ribose-5-phosphate to ribulose 5-phosphate. This chain is Ribose-5-phosphate isomerase A, found in Pyrococcus horikoshii (strain ATCC 700860 / DSM 12428 / JCM 9974 / NBRC 100139 / OT-3).